A 529-amino-acid polypeptide reads, in one-letter code: Bifunctional purine biosynthesis protein PurH (529 aa).

Positions 1–148 (MQQRRPVRRA…KNHKDVAIVV (148 aa)) constitute an MGS-like domain. Lys287 carries the N6-acetyllysine modification.

Belongs to the PurH family.

The catalysed reaction is (6R)-10-formyltetrahydrofolate + 5-amino-1-(5-phospho-beta-D-ribosyl)imidazole-4-carboxamide = 5-formamido-1-(5-phospho-D-ribosyl)imidazole-4-carboxamide + (6S)-5,6,7,8-tetrahydrofolate. It carries out the reaction IMP + H2O = 5-formamido-1-(5-phospho-D-ribosyl)imidazole-4-carboxamide. Its pathway is purine metabolism; IMP biosynthesis via de novo pathway; 5-formamido-1-(5-phospho-D-ribosyl)imidazole-4-carboxamide from 5-amino-1-(5-phospho-D-ribosyl)imidazole-4-carboxamide (10-formyl THF route): step 1/1. It functions in the pathway purine metabolism; IMP biosynthesis via de novo pathway; IMP from 5-formamido-1-(5-phospho-D-ribosyl)imidazole-4-carboxamide: step 1/1. The polypeptide is Bifunctional purine biosynthesis protein PurH (Escherichia coli O45:K1 (strain S88 / ExPEC)).